Reading from the N-terminus, the 428-residue chain is Spliceosome RNA helicase DDX39B (428 aa).

Positions 1-19 (MAENDVDNELLDYEDDEVE) are enriched in acidic residues. Residues 1 to 31 (MAENDVDNELLDYEDDEVETAAGGDGAEAPA) are disordered. Alanine 2 carries the N-acetylalanine modification. Lysine 36 is subject to N6-acetyllysine; alternate. Residue lysine 36 forms a Glycyl lysine isopeptide (Lys-Gly) (interchain with G-Cter in SUMO2); alternate linkage. A phosphoserine mark is found at serine 38 and serine 41. The short motif at 45 to 73 (SGFRDFLLKPELLRAIVDCGFEHPSEVQH) is the Q motif element. In terms of domain architecture, Helicase ATP-binding spans 76–249 (IPQAILGMDV…RKFMQDPMEI (174 aa)). 89–96 (AKSGMGKT) lines the ATP pocket. Threonine 172 is modified (phosphothreonine). The short motif at 196-199 (DECD) is the DECD box element. Positions 261 to 422 (GLQQYYVKLK…ELPDEIDISS (162 aa)) constitute a Helicase C-terminal domain.

The protein belongs to the DEAD box helicase family. DECD subfamily. In terms of assembly, homodimer, and heterodimer with DDX39A. DDX39B interacts with the THO subcomplex to form the THO-DDX39B complex which multimerizes into a 28-subunit tetrameric assembly. Component of the transcription/export (TREX) complex at least composed of ALYREF/THOC4, DDX39B, SARNP/CIP29, CHTOP and the THO subcomplex; in the complex interacts with THOC2. THOC1-THOC2-THOC3-DDX39B subcomplex is sufficient for the interaction with export factor NXF1-NXT1. TREX seems to have a dynamic structure involving ATP-dependent remodeling. Within the TREX complex bridges ALYREF/THOC4 and the THO subcomplex, and, in a ATP-dependent manner, ALYREF/THOC4 and SARNP/CIP29. Component of the spliceosome. Interacts directly with U2AF2. Interacts with RBM8A, RNPS1 and SRRM1, FYTTD1/UIF, THOC1, MX1 and POLDIP3. Interacts with LUZP4. Interacts with SARNP/CIP29 (via the C-terminal domain); the interaction is direct and facilitates RNA binding of DDX39B.

The protein localises to the nucleus. It is found in the nucleus speckle. The protein resides in the cytoplasm. It catalyses the reaction ATP + H2O = ADP + phosphate + H(+). Involved in nuclear export of spliced and unspliced mRNA. Component of the TREX complex which is thought to couple mRNA transcription, processing and nuclear export, and specifically associates with spliced mRNA and not with unspliced pre-mRNA. The TREX complex is recruited to spliced mRNAs by a transcription-independent mechanism, binds to mRNA upstream of the exon-junction complex (EJC) and is recruited in a splicing- and cap-dependent manner to a region near the 5' end of the mRNA where it functions in mRNA export to the cytoplasm via the TAP/NXF1 pathway. The THOC1-THOC2-THOC3 core complex alone is sufficient to promote ATPase activity of DDX39B; in the complex THOC2 is the only component that directly interacts with DDX39B. Associates with SARNP/CIP29, which facilitates RNA binding of DDX39B and likely plays a role in mRNA export. May undergo several rounds of ATP hydrolysis during assembly of TREX to drive subsequent loading of components such as ALYREF/THOC4 and CHTOP onto mRNA. Also associates with pre-mRNA independent of ALYREF/THOC4. Involved in the nuclear export of intronless mRNA; the ATP-bound form is proposed to recruit export adapter ALYREF/THOC4 to intronless mRNA; its ATPase activity is cooperatively stimulated by RNA and ALYREF/THOC4 and ATP hydrolysis is thought to trigger the dissociation from RNA to allow the association of ALYREF/THOC4 and the NXF1-NXT1 heterodimer. Involved in transcription elongation and genome stability. In terms of biological role, splice factor that is required for the first ATP-dependent step in spliceosome assembly and for the interaction of U2 snRNP with the branchpoint. Has both RNA-stimulated ATP binding/hydrolysis activity and ATP-dependent RNA unwinding activity. Even with the stimulation of RNA, the ATPase activity is weak. Can only hydrolyze ATP but not other NTPs. The RNA stimulation of ATPase activity does not have a strong preference for the sequence and length of the RNA. However, ssRNA stimulates the ATPase activity much more strongly than dsRNA. Can unwind 5' or 3' overhangs or blunt end RNA duplexes in vitro. The ATPase and helicase activities are not influenced by U2AF2; the effect of ALYREF/THOC4 is reported conflictingly. This chain is Spliceosome RNA helicase DDX39B (DDX39B), found in Bos taurus (Bovine).